The sequence spans 230 residues: Probable cytokinin riboside 5'-monophosphate phosphoribohydrolase LOG4 (230 aa).

Residues glutamate 91, 109-110 (RK), and 126-132 (GYGTIEE) each bind substrate.

This sequence belongs to the LOG family.

The catalysed reaction is N(6)-(dimethylallyl)adenosine 5'-phosphate + H2O = N(6)-dimethylallyladenine + D-ribose 5-phosphate. It carries out the reaction 9-ribosyl-trans-zeatin 5'-phosphate + H2O = trans-zeatin + D-ribose 5-phosphate. Functionally, cytokinin-activating enzyme working in the direct activation pathway. Phosphoribohydrolase that converts inactive cytokinin nucleotides to the biologically active free-base forms. The polypeptide is Probable cytokinin riboside 5'-monophosphate phosphoribohydrolase LOG4 (LOGL4) (Oryza sativa subsp. japonica (Rice)).